The chain runs to 467 residues: MIQLPFIQRLKWEEYMALFLGFFFVIFEKLLSCLAFMIHNTLGLFYRSVVRNEIKKRSKKRSRSRSVSLQRAKAIHDAADIREMCKISGYYVEDHLVRTEDDYILCIHRISKDSPGRIGSPHPKKLPVVYCHHGLLMNSEVWVCNVDPRNCLVFDLVNKGYDVWLGNNRGNKYSRQHLRFDSTDKEFWDFSIDDFAQYDIPDTIDYILKTSGQTKLTYIGFSQGTAQAFASLSIHPLLNDKINSLIALAPAISPKGLHNRVVDAFVKARPSILFFLFGRKSILPSAGFWQSFLAPKFFDAVLAYCLSQLFNWSCQNISSYQRLVSFAHLYSYTSVKCLVHWFQIMRSAEFRMYDNDQLGHDYFLKYYKAAKFPTNNIRTPIYLIWGGSDSLVDIQAMLNALPAEVEHVKVDSYEHLDMIWADTVKDYVIPPVLRRLRDIHHPPEHEENDKENREIQKNHIAPRNKPI.

The Cytoplasmic portion of the chain corresponds to 1–17 (MIQLPFIQRLKWEEYMA). The helical; Signal-anchor for type II membrane protein transmembrane segment at 18–38 (LFLGFFFVIFEKLLSCLAFMI) threads the bilayer. Residues 39 to 467 (HNTLGLFYRS…NHIAPRNKPI (429 aa)) lie on the Lumenal side of the membrane. Phosphoserine is present on S66. The AB hydrolase-1 domain occupies 127–421 (PVVYCHHGLL…SYEHLDMIWA (295 aa)). S222 serves as the catalytic Nucleophile. N311 and N316 each carry an N-linked (GlcNAc...) asparagine glycan. Active-site charge relay system residues include D389 and H415. The span at 440 to 457 (HHPPEHEENDKENREIQK) shows a compositional bias: basic and acidic residues. The tract at residues 440-467 (HHPPEHEENDKENREIQKNHIAPRNKPI) is disordered.

This sequence belongs to the AB hydrolase superfamily. Lipase family.

It localises to the cytoplasm. Its subcellular location is the membrane. Functionally, probable lipase. The chain is Probable lipase C1672.09 from Schizosaccharomyces pombe (strain 972 / ATCC 24843) (Fission yeast).